The sequence spans 174 residues: MFIFIKHGDNQQFLANINCSVLLLLHYARRKVGLPKTETIDLCDETGTMKLFFLMKTPGDYANKFLTARNTYYVCKVERGAPGTRVESAYKAFVPLLKNPEPELIDALRTQCDLLERSRVKMLRIQEAKKVVPIESSVNLTSKSSGRSDEEGTTRRAPVLKTRADFVSRKDKHR.

The tract at residues 138–174 is disordered; that stretch reads VNLTSKSSGRSDEEGTTRRAPVLKTRADFVSRKDKHR. Basic and acidic residues predominate over residues 162 to 174; the sequence is TRADFVSRKDKHR.

This is an uncharacterized protein from Bos taurus (Bovine).